Here is a 564-residue protein sequence, read N- to C-terminus: Arginine--tRNA ligase (564 aa).

The 'HIGH' region motif lies at Ala136–Asn146.

It belongs to the class-I aminoacyl-tRNA synthetase family. In terms of assembly, monomer.

Its subcellular location is the cytoplasm. It carries out the reaction tRNA(Arg) + L-arginine + ATP = L-arginyl-tRNA(Arg) + AMP + diphosphate. This chain is Arginine--tRNA ligase, found in Acetivibrio thermocellus (strain ATCC 27405 / DSM 1237 / JCM 9322 / NBRC 103400 / NCIMB 10682 / NRRL B-4536 / VPI 7372) (Clostridium thermocellum).